Here is a 1053-residue protein sequence, read N- to C-terminus: Focal adhesion kinase 1 (1053 aa).

The tract at residues 1-27 is disordered; sequence MAAAYLDPNLNHTPSSSAKTHLGTGME. Residues 10 to 19 are compositionally biased toward polar residues; that stretch reads LNHTPSSSAK. Residues 35–355 enclose the FERM domain; it reads RVLKVFHYFE…GYCRLVNGAT (321 aa). A Phosphotyrosine; by autocatalysis modification is found at Tyr397. Tyr407 carries the phosphotyrosine modification. One can recognise a Protein kinase domain in the interval 422-680; that stretch reads IELGRCIGEG…ELKAQLSTIL (259 aa). ATP is bound by residues 428–434, Lys454, and 500–502; these read IGEGQFG and ELC. Catalysis depends on Asp546, which acts as the Proton acceptor. Tyr576 and Tyr577 each carry phosphotyrosine; by SRC. Basic and acidic residues predominate over residues 686–697; the sequence is QQEERMRMESRR. Disordered stretches follow at residues 686–741 and 843–892; these read QQEE…QPNH and RGSI…LASL. A Phosphotyrosine modification is found at Tyr863. The residue at position 911 (Ser911) is a Phosphoserine. Phosphotyrosine is present on Tyr926.

Belongs to the protein kinase superfamily. Tyr protein kinase family. FAK subfamily. In terms of assembly, interacts with ARHGAP26, GRB7, DCC, PIK3R1, PXN and SRC. Interacts with the ARP2/3 complex. Post-translationally, phosphorylated on tyrosine residues upon activation, e.g. upon integrin signaling. Tyr-397 is the major autophosphorylation site, but other kinases can also phosphorylate this residue. Phosphorylation at Tyr-397 promotes interaction with SRC and SRC family members, leading to phosphorylation at Tyr-576, Tyr-577 and at additional tyrosine residues. Isoform 2 is phosphorylated on serine or threonine residues, but apparently not on tyrosine residues.

It localises to the cell junction. The protein resides in the focal adhesion. Its subcellular location is the cell membrane. It is found in the cytoplasm. The protein localises to the perinuclear region. It localises to the cell cortex. The protein resides in the cytoskeleton. Its subcellular location is the microtubule organizing center. It is found in the centrosome. The protein localises to the nucleus. It localises to the cilium basal body. It catalyses the reaction L-tyrosyl-[protein] + ATP = O-phospho-L-tyrosyl-[protein] + ADP + H(+). Its activity is regulated as follows. Subject to autoinhibition, mediated by interactions between the FERM domain and the kinase domain. Activated by autophosphorylation at Tyr-397. This promotes interaction with SRC and phosphorylation at Tyr-576 and Tyr-577 in the kinase activation loop. Phosphorylation at Tyr-576 and Tyr-577 is required for maximal kinase activity. Inhibited by TAE226. Non-receptor protein-tyrosine kinase that plays an essential role in regulating cell migration, adhesion, spreading, reorganization of the actin cytoskeleton, formation and disassembly of focal adhesions and cell protrusions, cell cycle progression, cell proliferation and apoptosis. Required for early embryonic development, embryonic angiogenesis, normal cardiomyocyte migration and proliferation, and normal heart development. Regulates axon growth and neuronal cell migration, axon branching and synapse formation; required for normal development of the nervous system. Plays a role in osteogenesis and differentiation of osteoblasts. Functions in integrin signal transduction, but also in signaling downstream of numerous growth factor receptors, G-protein coupled receptors (GPCR), ephrin receptors, netrin receptors and LDL receptors. Forms multisubunit signaling complexes with SRC and SRC family members upon activation; this leads to the phosphorylation of additional tyrosine residues, creating binding sites for scaffold proteins, effectors and substrates. Regulates numerous signaling pathways. Promotes activation of phosphatidylinositol 3-kinase and the AKT1 signaling cascade. Promotes activation of MAPK1/ERK2, MAPK3/ERK1 and the MAP kinase signaling cascade. Promotes localized and transient activation of guanine nucleotide exchange factors (GEFs) and GTPase-activating proteins (GAPs), and thereby modulates the activity of Rho family GTPases. Signaling via CAS family members mediates activation of RAC1. Regulates P53/TP53 activity and stability. Phosphorylates SRC; this increases SRC kinase activity. Isoform 2 (FRNK) does not contain a kinase domain and inhibits PTK2/FAK1 phosphorylation and signaling. In Gallus gallus (Chicken), this protein is Focal adhesion kinase 1 (PTK2).